The chain runs to 226 residues: Ribonuclease 3 (226 aa).

In terms of domain architecture, RNase III spans isoleucine 6–aspartate 128. Glutamate 41 is a binding site for Mg(2+). Aspartate 45 is a catalytic residue. The Mg(2+) site is built by aspartate 114 and glutamate 117. Glutamate 117 is a catalytic residue. Positions aspartate 155–leucine 225 constitute a DRBM domain.

The protein belongs to the ribonuclease III family. Homodimer. Mg(2+) is required as a cofactor.

The protein resides in the cytoplasm. It carries out the reaction Endonucleolytic cleavage to 5'-phosphomonoester.. Digests double-stranded RNA. Involved in the processing of primary rRNA transcript to yield the immediate precursors to the large and small rRNAs (23S and 16S). Processes some mRNAs, and tRNAs when they are encoded in the rRNA operon. Processes pre-crRNA and tracrRNA of type II CRISPR loci if present in the organism. This is Ribonuclease 3 from Yersinia pseudotuberculosis serotype O:1b (strain IP 31758).